Here is a 564-residue protein sequence, read N- to C-terminus: 5-aminolevulinate synthase, mitochondrial (564 aa).

The N-terminal 57 residues, 1–57, are a transit peptide targeting the mitochondrion; the sequence is MESITKVSMSVCPFVRSTSTQALRQLSQTSGALANQARQCPIAGNAIRAKEISIRSY. R113, S226, and K245 together coordinate substrate. Pyridoxal 5'-phosphate is bound by residues S278, H306, and T350. K353 is an active-site residue. K353 is modified (N6-(pyridoxal phosphate)lysine). Positions 382 and 383 each coordinate pyridoxal 5'-phosphate. Residue T468 participates in substrate binding.

This sequence belongs to the class-II pyridoxal-phosphate-dependent aminotransferase family. In terms of assembly, homodimer. Pyridoxal 5'-phosphate is required as a cofactor.

Its subcellular location is the mitochondrion matrix. It catalyses the reaction succinyl-CoA + glycine + H(+) = 5-aminolevulinate + CO2 + CoA. Its pathway is porphyrin-containing compound metabolism; protoporphyrin-IX biosynthesis; 5-aminolevulinate from glycine: step 1/1. Its function is as follows. Catalyzes the synthesis of 5-aminolevulinate (ALA) from succinyl-CoA and glycine, the first and rate-limiting step in heme biosynthesis. This chain is 5-aminolevulinate synthase, mitochondrial (HEM1), found in Candida albicans (strain SC5314 / ATCC MYA-2876) (Yeast).